The chain runs to 504 residues: 2-methylcitrate dehydratase 2 (504 aa).

This sequence belongs to the PrpD family. In terms of assembly, monomer.

It catalyses the reaction (2S,3S)-2-methylcitrate = 2-methyl-cis-aconitate + H2O. The enzyme catalyses citrate = D-threo-isocitrate. The protein operates within organic acid metabolism; propanoate degradation. It participates in carbohydrate metabolism; tricarboxylic acid cycle; isocitrate from oxaloacetate: step 1/2. Involved in the catabolism of short chain fatty acids (SCFA) via the 2-methylcitrate cycle I (propionate degradation route). Catalyzes the dehydration of 2-methylcitrate (2-MC) to yield the cis isomer 2-methyl-aconitate. Could also catalyze the dehydration of citrate and the hydration of cis-aconitate. This is 2-methylcitrate dehydratase 2 (prpD2) from Corynebacterium glutamicum (strain ATCC 13032 / DSM 20300 / JCM 1318 / BCRC 11384 / CCUG 27702 / LMG 3730 / NBRC 12168 / NCIMB 10025 / NRRL B-2784 / 534).